The primary structure comprises 310 residues: Tagatose-6-phosphate kinase (310 aa).

The protein belongs to the carbohydrate kinase PfkB family. LacC subfamily.

The catalysed reaction is D-tagatofuranose 6-phosphate + ATP = D-tagatofuranose 1,6-bisphosphate + ADP + H(+). It functions in the pathway carbohydrate metabolism; D-tagatose 6-phosphate degradation; D-glyceraldehyde 3-phosphate and glycerone phosphate from D-tagatose 6-phosphate: step 1/2. In Streptococcus mutans serotype c (strain ATCC 700610 / UA159), this protein is Tagatose-6-phosphate kinase.